Here is an 81-residue protein sequence, read N- to C-terminus: RNA-binding protein Hfq (81 aa).

The Sm domain occupies 11 to 71 (DIFLNNARKN…ISTITPTKPI (61 aa)).

The protein belongs to the Hfq family. Homohexamer.

Functionally, RNA chaperone that binds small regulatory RNA (sRNAs) and mRNAs to facilitate mRNA translational regulation in response to envelope stress, environmental stress and changes in metabolite concentrations. Also binds with high specificity to tRNAs. This chain is RNA-binding protein Hfq, found in Clostridium beijerinckii (strain ATCC 51743 / NCIMB 8052) (Clostridium acetobutylicum).